A 64-amino-acid chain; its full sequence is Cytochrome c oxidase subunit 5C (64 aa).

Residues 16–34 (VVKELVIGFSLGLVAGGFW) traverse the membrane as a helical segment.

The protein belongs to the cytochrome c oxidase subunit 5C family. Sweet potato cytochrome C oxidase consists of at least seven different polypeptides species, subunits I, II, III, IV, Va, Vb, and Vc in order of MW.

Its subcellular location is the mitochondrion inner membrane. In terms of biological role, this protein is one of the nuclear-coded polypeptide chains of cytochrome c oxidase, the terminal oxidase in mitochondrial electron transport. The protein is Cytochrome c oxidase subunit 5C (COX5C) of Ipomoea batatas (Sweet potato).